Reading from the N-terminus, the 382-residue chain is Beta-1,4-galactosyltransferase 6 (382 aa).

Topologically, residues 1–14 are cytoplasmic; that stretch reads MSVLRRMMRVSNRS. Residues 15-35 form a helical; Signal-anchor for type II membrane protein membrane-spanning segment; sequence LLAFIFFFSLSSSCLYFIYVA. At 36 to 382 the chain is on the lumenal side; it reads PGIANTYLFM…MPELAPIEDY (347 aa). N-linked (GlcNAc...) asparagine glycans are attached at residues Asn-71, Asn-75, Asn-83, Asn-84, Asn-99, and Asn-122. A disulfide bridge links Cys-108 with Cys-152. UDP-alpha-D-galactose is bound by residues 163 to 167, 202 to 204, 229 to 230, Tyr-258, and Trp-290; these read PFRNR, FNR, and VD. A disulfide bridge connects residues Cys-223 and Cys-242. Asp-230 provides a ligand contact to Mn(2+). An N-acetyl-D-glucosamine-binding site is contributed by 292-295; it reads GEDD. Residue Asn-307 is glycosylated (N-linked (GlcNAc...) asparagine). Residue His-323 coordinates Mn(2+). Position 323-324 (323-324) interacts with UDP-alpha-D-galactose; it reads HH. Arg-334 provides a ligand contact to N-acetyl-D-glucosamine. Asn-367 carries an N-linked (GlcNAc...) asparagine glycan.

The protein belongs to the glycosyltransferase 7 family. It depends on Mn(2+) as a cofactor. Mg(2+) serves as cofactor. As to expression, high expression in brain and adrenal gland, lower in liver, lung, colon and peripheral white blood cells.

It localises to the golgi apparatus. It is found in the golgi stack membrane. It catalyses the reaction a beta-D-glucosyl-(1&lt;-&gt;1')-N-acylsphing-4-enine + UDP-alpha-D-galactose = a beta-D-Gal-(1-&gt;4)-beta-D-Glc-(1&lt;-&gt;1)-Cer(d18:1(4E)) + UDP + H(+). The protein operates within protein modification; protein glycosylation. It functions in the pathway sphingolipid metabolism. With respect to regulation, inhibited by EDTA. In terms of biological role, catalyzes the synthesis of lactosylceramide (LacCer) via the transfer of galactose from UDP-galactose to glucosylceramide (GlcCer). LacCer is the starting point in the biosynthesis of all gangliosides (membrane-bound glycosphingolipids) which play pivotal roles in the CNS including neuronal maturation and axonal and myelin formation. The sequence is that of Beta-1,4-galactosyltransferase 6 from Homo sapiens (Human).